A 568-amino-acid chain; its full sequence is MGGIMAPKDIMTNTHAKSILNSMNSLRKSNTLCDVTLRVEQKDFPAHRIVLAACSDYFCAMFTSELSEKGKPYVDIQGLTASTMEILLDFVYTETVHVTVENVQELLPAACLLQLKGVKQACCEFLESQLDPSNCLGIRDFAETHNCVDLMQAAEVFSQKHFPEVVQHEEFILLSQGEVEKLIKCDEIQVDSEEPVFEAVINWVKHAKKEREESLPNLLQYVRMPLLTPRYITDVIDAEPFIRCSLQCRDLVDEAKKFHLRPELRSQMQGPRTRARLGANEVLLVVGGFGSQQSPIDVVEKYDPKTQEWSFLPSITRKRRYVASVSLHDRIYVIGGYDGRSRLSSVECLDYTADEDGVWYSVAPMNVRRGLAGATTLGDMIYVSGGFDGSRRHTSMERYDPNIDQWSMLGDMQTAREGAGLVVASGVIYCLGGYDGLNILNSVEKYDPHTGHWTNVTPMATKRSGAGVALLNDHIYVVGGFDGTAHLSSVEAYNIRTDSWTTVTSMTTPRCYVGATVLRGRLYAIAGYDGNSLLSSIECYDPIIDSWEVVTSMGTQRCDAGVCVLREK.

Residues 33–100 (CDVTLRVEQK…VYTETVHVTV (68 aa)) form the BTB domain. In terms of domain architecture, BACK spans 135 to 236 (CLGIRDFAET…LTPRYITDVI (102 aa)). Kelch repeat units follow at residues 282–329 (VLLV…SLHD), 331–379 (IYVI…TLGD), 380–426 (MIYV…VASG), 427–473 (VIYC…LLND), 475–520 (IYVV…VLRG), and 522–567 (LYAI…VLRE). An interaction with DVL3 region spans residues 405–568 (QWSMLGDMQT…DAGVCVLREK (164 aa)).

As to quaternary structure, component of the BCR(KLHL12) E3 ubiquitin ligase complex, at least composed of CUL3 and KLHL12 and RBX1. This complex interacts with DVL3 upon activation of the Wnt signaling pathway by WNT3A. Interacts with DRD4, KLHL2 and SEC31A. Interacts with PEF1 and PDCD6/ALG-2; interaction takes place in response to cytosolic calcium increase and leads to bridge together the BCR(KLHL12) complex and SEC31 (SEC31A or SEC31B). Ubiquitinated by the SCF(FBXL17) complex, leading to its degradation by the proteasome: ubiquitination by the SCF(FBXL17) complex takes place when aberrant BTB domain dimers are formed. As to expression, ubiquitously expressed. Highly expressed in testis and at lower levels in the submandibular salivary gland.

The protein resides in the cytoplasmic vesicle. Its subcellular location is the COPII-coated vesicle. It functions in the pathway protein modification; protein ubiquitination. Functionally, substrate-specific adapter of a BCR (BTB-CUL3-RBX1) E3 ubiquitin ligase complex that acts as a negative regulator of Wnt signaling pathway and ER-Golgi transport. The BCR(KLHL12) complex is involved in ER-Golgi transport by regulating the size of COPII coats, thereby playing a key role in collagen export, which is required for embryonic stem (ES) cells division: BCR(KLHL12) acts by mediating monoubiquitination of SEC31 (SEC31A or SEC31B). The BCR(KLHL12) complex is also involved in neural crest specification: in response to cytosolic calcium increase, interacts with the heterodimer formed with PEF1 and PDCD6/ALG-2, leading to bridge together the BCR(KLHL12) complex and SEC31 (SEC31A or SEC31B), promoting monoubiquitination of SEC31 and subsequent collagen export. As part of the BCR(KLHL12) complex, also acts as a negative regulator of the Wnt signaling pathway by mediating ubiquitination and subsequent proteolysis of DVL3. The BCR(KLHL12) complex also mediates polyubiquitination of DRD4 and PEF1, without leading to degradation of these proteins. This chain is Kelch-like protein 12 (KLHL12), found in Homo sapiens (Human).